Reading from the N-terminus, the 460-residue chain is Cysteine--tRNA ligase (460 aa).

Cysteine 28 contacts Zn(2+). A 'HIGH' region motif is present at residues 30-40 (MTVYDYCHLGH). Cysteine 209, histidine 234, and glutamate 238 together coordinate Zn(2+). Positions 266-270 (KMSKS) match the 'KMSKS' region motif. Lysine 269 provides a ligand contact to ATP.

This sequence belongs to the class-I aminoacyl-tRNA synthetase family. As to quaternary structure, monomer. It depends on Zn(2+) as a cofactor.

It is found in the cytoplasm. The catalysed reaction is tRNA(Cys) + L-cysteine + ATP = L-cysteinyl-tRNA(Cys) + AMP + diphosphate. The polypeptide is Cysteine--tRNA ligase (Pseudomonas putida (strain ATCC 47054 / DSM 6125 / CFBP 8728 / NCIMB 11950 / KT2440)).